A 201-amino-acid chain; its full sequence is Nucleoside triphosphate pyrophosphatase (201 aa).

Asp-77 acts as the Proton acceptor in catalysis.

This sequence belongs to the Maf family. Requires a divalent metal cation as cofactor.

It localises to the cytoplasm. The catalysed reaction is a ribonucleoside 5'-triphosphate + H2O = a ribonucleoside 5'-phosphate + diphosphate + H(+). It catalyses the reaction a 2'-deoxyribonucleoside 5'-triphosphate + H2O = a 2'-deoxyribonucleoside 5'-phosphate + diphosphate + H(+). Its function is as follows. Nucleoside triphosphate pyrophosphatase. May have a dual role in cell division arrest and in preventing the incorporation of modified nucleotides into cellular nucleic acids. This Rickettsia akari (strain Hartford) protein is Nucleoside triphosphate pyrophosphatase.